The following is an 804-amino-acid chain: Leucine--tRNA ligase (804 aa).

Positions 39–50 match the 'HIGH' region motif; sequence PYPSGKGLHVGH. The short motif at 573–577 is the 'KMSKS' region element; it reads KMSKS. An ATP-binding site is contributed by Lys-576.

It belongs to the class-I aminoacyl-tRNA synthetase family.

The protein resides in the cytoplasm. It carries out the reaction tRNA(Leu) + L-leucine + ATP = L-leucyl-tRNA(Leu) + AMP + diphosphate. The chain is Leucine--tRNA ligase from Lactobacillus delbrueckii subsp. bulgaricus (strain ATCC 11842 / DSM 20081 / BCRC 10696 / JCM 1002 / NBRC 13953 / NCIMB 11778 / NCTC 12712 / WDCM 00102 / Lb 14).